Reading from the N-terminus, the 303-residue chain is Nucleotide-binding protein Dvul_1502 (303 aa).

Position 23 to 30 (23 to 30 (GLSGAGKS)) interacts with ATP. Residue 75–78 (DLRE) coordinates GTP.

It belongs to the RapZ-like family.

Its function is as follows. Displays ATPase and GTPase activities. This is Nucleotide-binding protein Dvul_1502 from Nitratidesulfovibrio vulgaris (strain DP4) (Desulfovibrio vulgaris).